The primary structure comprises 1061 residues: MPKRTDVHKIMVIGSGPIIIGQAAEFDYSGTQACLALREEGYEVVLVNSNPATIMTDTEIADKVYIEPLTVESVSRIIRQEFPDAILPTLGGQIGLNLAIALAKTGILEELGIKLLGTQLDAIDQAEDRQRFKDLMQELNEPVPDSKTVETVQEALDFAAEIGYPVIVRPAFTMGGTGGGLCDNPEQLKEIVANGLELSPATQCLIEKSIMGYKEIEFEVMRDADNNAMVVCSMENFDPVGIHTGDSIVFAPTQTLSDREYQMLRNCSLKLIRALKIEGGCNVQLALDPNSYRYYVIEVNPRVSRSSALASKATGYPIAKLAAKIAVGLTLDEIKNPVTGTTFAEFEPALDYVVAKIPRWPFDKFTRANRRLGTQMKATGEVMAIGRSAQEALQKAVRSLEIDEKDLISAKAQSATDDEVEEKLFHAQDDRLFYIAEAFRRGYTIEEVHELTKINLYYLDIVKQIVELESELSQNKEDLDVLKRAKRYGYSDYTIAKLWGTTEDEVRNLRKEHKLLPVYKMVDTCAAEFDSSTPYFYSSYDLENESKKSDKKSVLVIGSGPIRIGQGVEFDYATVHSVKAIQKLGYEAIVMNSNPETVSTDFSISDKLYFEPLTLEDVLNVIDLEQPMGVIVQFGGQTAINLAAGLEAHSVKILGTTVEDLDRAEDRELFDQTIKNLGLKQPIGKTATTQEQVIACAEEIGYPVLVRPSYVLGGRAMEIVNNEQELLDYLAQNAPAEIDHPILVDAYLSGLECEVDAICDGKDVLLPGIMEHIEHAGVHSGDSMAVYPPQSFDENIKQQIVDATEKLAVALKCVGIMNIQFIIHNNEAYVLEVNPRASRTVPFLSKITGIEMAQVATRVILGESLAEQGYQSGLYRESDMVHVKAPVFSFSKLADVDSFLGPEMKSTGEVMGSDYTFEKALYKAFTGAKMELPDNGNVLLTIEDKDKDAVLPLAKRFSKIGYRMFATEGTSQFLRENGLFVQTVDKLGKDTGNETSLHDLIVNDGVDLVINTMSHDQEVASDGFVIRQLAIEHNIALLTSLNTADALLKALENRSFATNSL.

The carboxyphosphate synthetic domain stretch occupies residues 1 to 401; sequence MPKRTDVHKI…ALQKAVRSLE (401 aa). ATP contacts are provided by R129, R169, G175, G176, K208, I210, E215, G241, I242, H243, Q284, and E298. The region spanning 133–327 is the ATP-grasp 1 domain; sequence KDLMQELNEP…IAKLAAKIAV (195 aa). Mg(2+) is bound by residues Q284, E298, and N300. Positions 284, 298, and 300 each coordinate Mn(2+). The tract at residues 402 to 546 is oligomerization domain; the sequence is IDEKDLISAK…YSSYDLENES (145 aa). Positions 547–929 are carbamoyl phosphate synthetic domain; the sequence is KKSDKKSVLV…ALYKAFTGAK (383 aa). The ATP-grasp 2 domain occupies 671-861; sequence DQTIKNLGLK…MAQVATRVIL (191 aa). Positions 707, 746, 748, 752, 777, 778, 779, 780, 820, and 832 each coordinate ATP. 3 residues coordinate Mg(2+): Q820, E832, and N834. Mn(2+) is bound by residues Q820, E832, and N834. The region spanning 930 to 1061 is the MGS-like domain; sequence MELPDNGNVL…ENRSFATNSL (132 aa). Positions 930 to 1061 are allosteric domain; it reads MELPDNGNVL…ENRSFATNSL (132 aa).

Belongs to the CarB family. In terms of assembly, composed of two chains; the small (or glutamine) chain promotes the hydrolysis of glutamine to ammonia, which is used by the large (or ammonia) chain to synthesize carbamoyl phosphate. Tetramer of heterodimers (alpha,beta)4. Requires Mg(2+) as cofactor. It depends on Mn(2+) as a cofactor.

It carries out the reaction hydrogencarbonate + L-glutamine + 2 ATP + H2O = carbamoyl phosphate + L-glutamate + 2 ADP + phosphate + 2 H(+). The enzyme catalyses hydrogencarbonate + NH4(+) + 2 ATP = carbamoyl phosphate + 2 ADP + phosphate + 2 H(+). The protein operates within amino-acid biosynthesis; L-arginine biosynthesis; carbamoyl phosphate from bicarbonate: step 1/1. It participates in pyrimidine metabolism; UMP biosynthesis via de novo pathway; (S)-dihydroorotate from bicarbonate: step 1/3. Its function is as follows. Large subunit of the glutamine-dependent carbamoyl phosphate synthetase (CPSase). CPSase catalyzes the formation of carbamoyl phosphate from the ammonia moiety of glutamine, carbonate, and phosphate donated by ATP, constituting the first step of 2 biosynthetic pathways, one leading to arginine and/or urea and the other to pyrimidine nucleotides. The large subunit (synthetase) binds the substrates ammonia (free or transferred from glutamine from the small subunit), hydrogencarbonate and ATP and carries out an ATP-coupled ligase reaction, activating hydrogencarbonate by forming carboxy phosphate which reacts with ammonia to form carbamoyl phosphate. The sequence is that of Carbamoyl phosphate synthase large chain from Ligilactobacillus salivarius (strain UCC118) (Lactobacillus salivarius).